Consider the following 177-residue polypeptide: MVLAALIREEIPIPDGVDVTIDGGVTVKGPKWELSRKFNHSEISMAVEDDKVVLEVKFPKKKDKAMIGTVRAHISNMITGVTEGFRYRMKIVYAHFPMSVKVAGDKVVIENFLGERHPRTARFVGDTKVQVKGDEVEITGINKEHVGQTMANIEQATKIKGRDPRVFQDGIYLVSKE.

Belongs to the universal ribosomal protein uL6 family. Part of the 50S ribosomal subunit.

Its function is as follows. This protein binds to the 23S rRNA, and is important in its secondary structure. It is located near the subunit interface in the base of the L7/L12 stalk, and near the tRNA binding site of the peptidyltransferase center. This chain is Large ribosomal subunit protein uL6, found in Methanothermobacter thermautotrophicus (strain ATCC 29096 / DSM 1053 / JCM 10044 / NBRC 100330 / Delta H) (Methanobacterium thermoautotrophicum).